We begin with the raw amino-acid sequence, 432 residues long: Myb family transcription factor EFM (432 aa).

Residues 36-81 (LEDLLSRLEQERLKIDAFKRELPLCMQLLNNAVEVYKQQLEAYRAN) are a coiled coil. Polar residues-rich tracts occupy residues 123–139 (SQSE…TDQS) and 187–197 (SPTNEHTNGQD). The disordered stretch occupies residues 123 to 237 (SQSETKPKNI…SQSNRKARRC (115 aa)). Positions 201–231 (ESMINNDNNYNNNNNNNSNSNGVSSTTSQSN) are enriched in low complexity. The HTH myb-type domain occupies 230 to 290 (SNRKARRCWS…HLQKYRLHTR (61 aa)). Positions 261–286 (PKQIRELMKVDGLTNDEVKSHLQKYR) form a DNA-binding region, H-T-H motif. The tract at residues 354 to 412 (FYTTPPPPQPLHHHHFQTFNGSSGGTASTDSTHHQVTDSPTVEGKSPESGGGERKGLAA) is disordered.

In terms of assembly, interacts with JMJ30, but not with SVP, FLC or CO. Specifically expressed in vascular tissues of cotyledons, rosette leaves and cauline leaves. Not detected in the vegetative shoot apical meristem.

The protein resides in the nucleus. Transcription factor acting as a flowering repressor, directly repressing FT expression in a dosage-dependent manner in the leaf vasculature. In Arabidopsis thaliana (Mouse-ear cress), this protein is Myb family transcription factor EFM.